The chain runs to 380 residues: Ceramide synthase 2 (380 aa).

The Lumenal portion of the chain corresponds to methionine 1–tyrosine 40. The N-linked (GlcNAc...) asparagine glycan is linked to asparagine 19. Residues isoleucine 41–alanine 61 traverse the membrane as a helical segment. The segment at leucine 67–serine 128 is homeobox-like. The TLC domain occupies lysine 131–threonine 332. The next 4 helical transmembrane spans lie at phenylalanine 140–phenylalanine 160, tryptophan 181–valine 201, glutamine 209–valine 229, and isoleucine 264–isoleucine 284. The Last loop motif signature appears at tyrosine 291–phenylalanine 300. A helical transmembrane segment spans residues phenylalanine 304–leucine 324. Over arginine 325–aspartate 380 the chain is Cytoplasmic. The interval aspartate 338–aspartate 380 is disordered. Phosphoserine is present on serine 341. A compositionally biased stretch (acidic residues) spans glutamate 344–glutamate 353. Threonine 346 bears the Phosphothreonine mark. A phosphoserine mark is found at serine 348 and serine 349.

Interacts with ATP6V0C, ASGR1, ASGR2 and SLC22A1/OCT1. Interacts with ELOV1, HSD17B12 and TECR. Interacts with NDUFS2. Post-translationally, acetylated. Deacetylation by SIRT3 increases enzyme activity and promotes mitochondrial ceramide accumulation. Phosphorylated at the C-terminus by CK2, leading to increase the ceramide synthase activity.

The protein localises to the endoplasmic reticulum membrane. The enzyme catalyses a very long-chain fatty acyl-CoA + a sphingoid base = an N-(very-long-chain fatty acyl)-sphingoid base + CoA + H(+). The catalysed reaction is docosanoyl-CoA + sphinganine = N-docosanoylsphinganine + CoA + H(+). It catalyses the reaction tetracosanoyl-CoA + sphinganine = N-tetracosanoylsphinganine + CoA + H(+). It carries out the reaction hexacosanoyl-CoA + sphinganine = N-hexacosanoylsphinganine + CoA + H(+). The enzyme catalyses (15Z)-tetracosenoyl-CoA + sphinganine = N-(15Z-tetracosenoyl)-sphinganine + CoA + H(+). The catalysed reaction is 2-hydroxytetracosanoyl-CoA + sphinganine = N-(2-hydroxytetracosanoyl)-sphinganine + CoA + H(+). It catalyses the reaction 2-hydroxydocosanoyl-CoA + sphinganine = N-(2-hydroxydocosanoyl)-sphinganine + CoA + H(+). It carries out the reaction 2-hydroxytetracosenoyl-CoA + sphinganine = N-(2-hydroxytetracosenoyl)-sphinganine + CoA + H(+). The enzyme catalyses tetracosenoyl-CoA + sphinganine = an N-tetracosenoylsphinganine + CoA + H(+). The catalysed reaction is hexacosenoyl-CoA + sphinganine = N-hexacosenoylsphinganine + CoA + H(+). It catalyses the reaction tetracosanoyl-CoA + sphing-4-enine = N-tetracosanoyl-sphing-4-enine + CoA + H(+). It carries out the reaction tetracosenoyl-CoA + sphing-4-enine = N-(tetracosenoyl)-sphing-4-enine + CoA + H(+). The enzyme catalyses heptadecasphing-4-enine + tetracosanoyl-CoA = N-tetracosanoyl-heptadecasphing-4-enine + CoA + H(+). The catalysed reaction is a fatty acyl-CoA + sphing-4-enine = an N-acylsphing-4-enine + CoA + H(+). It catalyses the reaction sphing-4-enine + hexadecanoyl-CoA = N-hexadecanoylsphing-4-enine + CoA + H(+). It carries out the reaction sphing-4-enine + octadecanoyl-CoA = N-octadecanoylsphing-4-enine + CoA + H(+). The enzyme catalyses eicosanoyl-CoA + sphing-4-enine = N-eicosanoyl-sphing-4-enine + CoA + H(+). The catalysed reaction is sphinganine + hexadecanoyl-CoA = N-hexadecanoylsphinganine + CoA + H(+). It catalyses the reaction sphinganine + octadecanoyl-CoA = N-(octadecanoyl)-sphinganine + CoA + H(+). It carries out the reaction sphinganine + (9Z)-octadecenoyl-CoA = N-(9Z-octadecenoyl)-sphinganine + CoA + H(+). The enzyme catalyses eicosanoyl-CoA + sphinganine = N-eicosanoylsphinganine + CoA + H(+). The protein operates within lipid metabolism; sphingolipid metabolism. With respect to regulation, ceramide synthase activity is inhibited by sphingosine-1-phosphate. Ceramide synthase that catalyzes the transfer of the acyl chain from acyl-CoA to a sphingoid base, with high selectivity toward very-long-chain fatty acyl-CoA (chain length C22-C27). N-acylates sphinganine and sphingosine bases to form dihydroceramides and ceramides in de novo synthesis and salvage pathways, respectively. Plays a non-redundant role in the synthesis of ceramides with very-long-chain fatty acids in kidney, liver and brain. Regulates the abundance of myelin-specific sphingolipids galactosylceramide and sulfatide that affects myelin sheath architecture and motor neuron functions. In Bos taurus (Bovine), this protein is Ceramide synthase 2.